Reading from the N-terminus, the 450-residue chain is MEQDKYLTVAAITKYIEKKFEVDPYMKQVFVRGEISNLKQPASGHLYFTVKDEFAMLRSVMFHKAVQKIGFVPEDGMNVLITGRIGVFTKAGRYQFYAEHMEPDGVGALYIQLEQLKSQLEKEGLFAETHKKVLPSFPSKVAVVTSKTGAAVRDILTTIHRRMPSVEVIVYPTIVQGEKAAQKIVENIGKINQRNDIDVMIIGRGGGSLEELWAFNEEPVVRAVYDSDVPVISAVGHETDFALSDFSADVRAATPTAAAELAVPDYRDLEERLAERKYRLLAVTRQALERKERSLEQLKQHLILNGPKHQLEQQMERTDYFSERLNNAFSKQIFVKQTVFDRLNDRLHYYHPNKEIELQKEQMALRLQALEKAMKQLLKDKQQSFFRQIDALEHLSPLSLLKRGFGVTYKENMLVKSVQELEVGDNIQVKMQGGQIEALITAKEEDISGN.

Belongs to the XseA family. As to quaternary structure, heterooligomer composed of large and small subunits.

The protein localises to the cytoplasm. It catalyses the reaction Exonucleolytic cleavage in either 5'- to 3'- or 3'- to 5'-direction to yield nucleoside 5'-phosphates.. Its function is as follows. Bidirectionally degrades single-stranded DNA into large acid-insoluble oligonucleotides, which are then degraded further into small acid-soluble oligonucleotides. This is Exodeoxyribonuclease 7 large subunit from Listeria monocytogenes serotype 4b (strain CLIP80459).